Reading from the N-terminus, the 153-residue chain is Aspartate carbamoyltransferase regulatory chain (153 aa).

Zn(2+) contacts are provided by Cys110, Cys115, Cys138, and Cys141.

The protein belongs to the PyrI family. In terms of assembly, contains catalytic and regulatory chains. The cofactor is Zn(2+).

Its function is as follows. Involved in allosteric regulation of aspartate carbamoyltransferase. The chain is Aspartate carbamoyltransferase regulatory chain from Bacteroides thetaiotaomicron (strain ATCC 29148 / DSM 2079 / JCM 5827 / CCUG 10774 / NCTC 10582 / VPI-5482 / E50).